We begin with the raw amino-acid sequence, 221 residues long: Catechol O-methyltransferase (221 aa).

S-adenosyl-L-methionine-binding residues include Val41, Gly65, Leu67, Ser71, Glu89, His94, Ala118, and Asp139. Mg(2+) contacts are provided by Asp139, Asp165, and Asn166.

Belongs to the class I-like SAM-binding methyltransferase superfamily. Cation-dependent O-methyltransferase family. In terms of assembly, homodimer. Requires Mg(2+) as cofactor.

It carries out the reaction a catechol + S-adenosyl-L-methionine = a guaiacol + S-adenosyl-L-homocysteine + H(+). Its activity is regulated as follows. The metal ion affects the meta and para-regiospecificity of the enzyme as well as the enzyme activity and thermal stability. Its function is as follows. Catechol O-methyltransferase that can use various catechol-like compounds. Can produce vanillic acid (meta-form) and iso-vanillic acid (para-form) from protocatechuic acid (PCA). Does not have a regiospecificity, and produces the meta- and para-forms of the products in equal proportion. The sequence is that of Catechol O-methyltransferase from Niastella koreensis (strain DSM 17620 / KACC 11465 / NBRC 106392 / GR20-10).